We begin with the raw amino-acid sequence, 335 residues long: Probable tRNA N6-adenosine threonylcarbamoyltransferase (335 aa).

Residues His-109, His-113, and Tyr-130 each coordinate a divalent metal cation. Substrate contacts are provided by residues 130–134 (YVSGG), Asp-162, Gly-177, Glu-181, and Asn-266. A divalent metal cation is bound at residue Asp-294.

It belongs to the KAE1 / TsaD family. As to quaternary structure, component of the EKC/KEOPS complex; the whole complex dimerizes. Requires a divalent metal cation as cofactor.

It is found in the cytoplasm. The protein localises to the nucleus. It catalyses the reaction L-threonylcarbamoyladenylate + adenosine(37) in tRNA = N(6)-L-threonylcarbamoyladenosine(37) in tRNA + AMP + H(+). In terms of biological role, component of the EKC/KEOPS complex that is required for the formation of a threonylcarbamoyl group on adenosine at position 37 (t(6)A37) in tRNAs that read codons beginning with adenine. The complex is probably involved in the transfer of the threonylcarbamoyl moiety of threonylcarbamoyl-AMP (TC-AMP) to the N6 group of A37. Osgep likely plays a direct catalytic role in this reaction, but requires other protein(s) of the complex to fulfill this activity. This chain is Probable tRNA N6-adenosine threonylcarbamoyltransferase, found in Nematostella vectensis (Starlet sea anemone).